We begin with the raw amino-acid sequence, 176 residues long: Cystatin-related protein 2 (176 aa).

An N-terminal signal peptide occupies residues 1 to 26; the sequence is MYKTLCGTQLLLAIFVLFLNFSHATA. The propeptide occupies 27-30; the sequence is KGTR. N71 carries N-linked (GlcNAc...) asparagine glycosylation. 2 disulfides stabilise this stretch: C129/C139 and C153/C173.

It belongs to the cystatin family. Prostate.

This is Cystatin-related protein 2 (Crp2) from Rattus norvegicus (Rat).